The sequence spans 103 residues: Large ribosomal subunit protein bL21 (103 aa).

Belongs to the bacterial ribosomal protein bL21 family. Part of the 50S ribosomal subunit. Contacts protein L20.

Its function is as follows. This protein binds to 23S rRNA in the presence of protein L20. The polypeptide is Large ribosomal subunit protein bL21 (Actinobacillus pleuropneumoniae serotype 5b (strain L20)).